The sequence spans 702 residues: Mesothelin-like protein (702 aa).

An N-terminal signal peptide occupies residues 1-35; the sequence is MAAAVTIPGPRIGALQSSGLTLLLSLAAHCSGPQA. Residues 36–638 lie on the Extracellular side of the membrane; it reads KVLSPGGLDA…AQASTSGSLW (603 aa). Asparagine 122, asparagine 307, and asparagine 424 each carry an N-linked (GlcNAc...) asparagine glycan. Residues 588 to 611 are disordered; it reads QLGLDASPTSPTGPAHGTRGPPST. Residues 639–668 form a helical membrane-spanning segment; that stretch reads APLGYLPLAMALPCSLLCLLHWGTCILVSV. Residues 669-702 are Cytoplasmic-facing; that stretch reads DSVASGWLGSQGSGAGKTEVLDSAGRPLGLTGQL.

The protein belongs to the mesothelin family.

The protein resides in the membrane. May play a role in cellular adhesion. This Homo sapiens (Human) protein is Mesothelin-like protein (MSLNL).